Consider the following 300-residue polypeptide: Acetaldehyde dehydrogenase (300 aa).

10 to 13 (SGNI) contributes to the NAD(+) binding site. Cys129 (acyl-thioester intermediate) is an active-site residue. Residues 160 to 168 (SAGPGTRKN) and Asn271 contribute to the NAD(+) site.

This sequence belongs to the acetaldehyde dehydrogenase family.

The enzyme catalyses acetaldehyde + NAD(+) + CoA = acetyl-CoA + NADH + H(+). The chain is Acetaldehyde dehydrogenase from Alkalilimnicola ehrlichii (strain ATCC BAA-1101 / DSM 17681 / MLHE-1).